We begin with the raw amino-acid sequence, 217 residues long: Adenylate kinase (217 aa).

10 to 15 provides a ligand contact to ATP; sequence GIGKGT. Residues 30-59 form an NMP region; sequence ATGDIFRKNFQENTPLGKESKKFINKGLLV. AMP contacts are provided by residues threonine 31, arginine 36, 57 to 59, 85 to 88, and glutamine 92; these read LLV and GFPR. Positions 126–163 are LID; sequence GRRICSHCGKVYHLDNLPPKIEGICDKDQKKLIQREDD. Arginine 127 is a binding site for ATP. Cysteine 130 and cysteine 133 together coordinate Zn(2+). 136–137 is an ATP binding site; it reads VY. The Zn(2+) site is built by cysteine 150 and aspartate 153. AMP contacts are provided by arginine 160 and arginine 171. Glutamine 199 is an ATP binding site.

The protein belongs to the adenylate kinase family. Monomer.

Its subcellular location is the cytoplasm. It catalyses the reaction AMP + ATP = 2 ADP. It participates in purine metabolism; AMP biosynthesis via salvage pathway; AMP from ADP: step 1/1. Functionally, catalyzes the reversible transfer of the terminal phosphate group between ATP and AMP. Plays an important role in cellular energy homeostasis and in adenine nucleotide metabolism. This Phytoplasma australiense protein is Adenylate kinase.